Reading from the N-terminus, the 1400-residue chain is DNA-directed RNA polymerase subunit beta' (1400 aa).

The Zn(2+) site is built by cysteine 71, cysteine 73, cysteine 86, and cysteine 89. Positions 462, 464, and 466 each coordinate Mg(2+). Residues cysteine 811, cysteine 885, cysteine 892, and cysteine 895 each coordinate Zn(2+).

Belongs to the RNA polymerase beta' chain family. The RNAP catalytic core consists of 2 alpha, 1 beta, 1 beta' and 1 omega subunit. When a sigma factor is associated with the core the holoenzyme is formed, which can initiate transcription. Requires Mg(2+) as cofactor. Zn(2+) serves as cofactor.

The catalysed reaction is RNA(n) + a ribonucleoside 5'-triphosphate = RNA(n+1) + diphosphate. In terms of biological role, DNA-dependent RNA polymerase catalyzes the transcription of DNA into RNA using the four ribonucleoside triphosphates as substrates. This is DNA-directed RNA polymerase subunit beta' from Brucella suis biovar 1 (strain 1330).